An 841-amino-acid chain; its full sequence is Chitin synthase 1 (841 aa).

The segment covering 1–13 (MNPGQKQEHDQYP) has biased composition (basic and acidic residues). Residues 1 to 98 (MNPGQKQEHD…YGEAPRRQPR (98 aa)) form a disordered region. Residues 76 to 85 (PPQPMGPPSP) are compositionally biased toward pro residues. The next 9 helical transmembrane spans lie at 302 to 322 (WFFQ…IDVG), 385 to 405 (SVFG…FTAL), 526 to 546 (LIFS…LTSA), 564 to 584 (ILHT…FILA), 602 to 622 (FFAI…VVGV), 644 to 664 (NIII…FLFF), 673 to 693 (FIQY…YAFC), 778 to 798 (VISW…ENIL), and 816 to 836 (LWSV…YLIF).

It belongs to the chitin synthase family.

The protein resides in the cell membrane. It catalyses the reaction [(1-&gt;4)-N-acetyl-beta-D-glucosaminyl](n) + UDP-N-acetyl-alpha-D-glucosamine = [(1-&gt;4)-N-acetyl-beta-D-glucosaminyl](n+1) + UDP + H(+). In terms of biological role, polymerizes chitin, a structural polymer of the cell wall and septum, by transferring the sugar moiety of UDP-GlcNAc to the non-reducing end of the growing chitin polymer. In Phycomyces blakesleeanus (strain ATCC 8743b / DSM 1359 / FGSC 10004 / NBRC 33097 / NRRL 1555), this protein is Chitin synthase 1 (chs1).